Consider the following 436-residue polypeptide: Enolase (436 aa).

Q167 lines the (2R)-2-phosphoglycerate pocket. Residue E209 is the Proton donor of the active site. Mg(2+) contacts are provided by D246, E291, and D318. (2R)-2-phosphoglycerate contacts are provided by K343, R372, S373, and K394. The Proton acceptor role is filled by K343.

It belongs to the enolase family. Component of the RNA degradosome, a multiprotein complex involved in RNA processing and mRNA degradation. It depends on Mg(2+) as a cofactor.

Its subcellular location is the cytoplasm. The protein resides in the secreted. It is found in the cell surface. It catalyses the reaction (2R)-2-phosphoglycerate = phosphoenolpyruvate + H2O. It participates in carbohydrate degradation; glycolysis; pyruvate from D-glyceraldehyde 3-phosphate: step 4/5. Catalyzes the reversible conversion of 2-phosphoglycerate (2-PG) into phosphoenolpyruvate (PEP). It is essential for the degradation of carbohydrates via glycolysis. The chain is Enolase from Haemophilus influenzae (strain PittEE).